A 152-amino-acid chain; its full sequence is Small ribosomal subunit protein bS6 (152 aa).

Residues 94–152 (VKQEGPLPTPKPSNKSSTQSENKDNPETKVESKEEQSVTNSDTSTTKKDDNEIKENTES) form a disordered region. Basic and acidic residues-rich tracts occupy residues 114 to 129 (ENKD…KEEQ) and 138 to 152 (TTKK…NTES).

Belongs to the bacterial ribosomal protein bS6 family.

Its function is as follows. Binds together with bS18 to 16S ribosomal RNA. The chain is Small ribosomal subunit protein bS6 from Prochlorococcus marinus (strain MIT 9312).